We begin with the raw amino-acid sequence, 364 residues long: Peptide chain release factor 1 (364 aa).

Q238 is modified (N5-methylglutamine).

This sequence belongs to the prokaryotic/mitochondrial release factor family. Methylated by PrmC. Methylation increases the termination efficiency of RF1.

The protein resides in the cytoplasm. Its function is as follows. Peptide chain release factor 1 directs the termination of translation in response to the peptide chain termination codons UAG and UAA. The polypeptide is Peptide chain release factor 1 (Psychrobacter sp. (strain PRwf-1)).